A 671-amino-acid chain; its full sequence is Zinc finger protein 750 (671 aa).

The CCHC-type zinc-finger motif lies at 25 to 51 (YKCFQCPFTCNEKSHLFNHMKYGLCKN). Residues Cys27, Cys30, His43, and Cys49 each coordinate Zn(2+). 3 disordered regions span residues 66–87 (PKVN…SPVP), 366–433 (ETSP…KDFT), and 592–671 (SSPG…PRVS). 2 stretches are compositionally biased toward polar residues: residues 67-78 (KVNSTDQKQPSN) and 402-412 (SPTNFTQNSQG).

It is found in the nucleus. Its function is as follows. Transcription factor involved in epidermis differentiation. This Xenopus tropicalis (Western clawed frog) protein is Zinc finger protein 750 (znf750).